Reading from the N-terminus, the 905-residue chain is DNA mismatch repair protein MutS (905 aa).

A disordered region spans residues 388-410 (LERPANPEGTYPTDAETSGDTLP). 638–645 (GPNMAGKS) serves as a coordination point for ATP. A disordered region spans residues 826–847 (RDAARGTNSAPSRQTLPGLDLP). A compositionally biased stretch (polar residues) spans 831-840 (GTNSAPSRQT).

The protein belongs to the DNA mismatch repair MutS family.

In terms of biological role, this protein is involved in the repair of mismatches in DNA. It is possible that it carries out the mismatch recognition step. This protein has a weak ATPase activity. The sequence is that of DNA mismatch repair protein MutS from Nitratidesulfovibrio vulgaris (strain DP4) (Desulfovibrio vulgaris).